The primary structure comprises 192 residues: Protein GrpE (192 aa).

A compositionally biased stretch (basic and acidic residues) spans 1-20; it reads MEERNEQVVEEVKEEVKEAQ. The disordered stretch occupies residues 1–34; sequence MEERNEQVVEEVKEEVKEAQVEEAVTSEDSEETV. The span at 25-34 shows a compositional bias: acidic residues; sequence VTSEDSEETV.

This sequence belongs to the GrpE family. As to quaternary structure, homodimer.

Its subcellular location is the cytoplasm. Participates actively in the response to hyperosmotic and heat shock by preventing the aggregation of stress-denatured proteins, in association with DnaK and GrpE. It is the nucleotide exchange factor for DnaK and may function as a thermosensor. Unfolded proteins bind initially to DnaJ; upon interaction with the DnaJ-bound protein, DnaK hydrolyzes its bound ATP, resulting in the formation of a stable complex. GrpE releases ADP from DnaK; ATP binding to DnaK triggers the release of the substrate protein, thus completing the reaction cycle. Several rounds of ATP-dependent interactions between DnaJ, DnaK and GrpE are required for fully efficient folding. This is Protein GrpE from Bacillus cereus (strain AH187).